The following is a 166-amino-acid chain: Large ribosomal subunit protein bL17 (166 aa).

The tract at residues 122–166 (PESAPVKAKQDRSKRVRGSKKTQEGSEKAEVSASAGEAAAVTEEK) is disordered. The segment covering 142–151 (KTQEGSEKAE) has biased composition (basic and acidic residues). Residues 152–166 (VSASAGEAAAVTEEK) are compositionally biased toward low complexity.

Belongs to the bacterial ribosomal protein bL17 family. Part of the 50S ribosomal subunit. Contacts protein L32.

The protein is Large ribosomal subunit protein bL17 of Chlorobium phaeobacteroides (strain BS1).